We begin with the raw amino-acid sequence, 195 residues long: MKVYLGGEAEVKILENVVVKTRIPKRYRIKELDRELRLRRTKMEAKIISAARRAGVPTPIVLDVEEDTIVMERIYGEAVKDVMSKDVSREVGRMAAKLHRAGIIHGDITPMNLILSNSRIYFVDFGLAFFDNKVEPMGVDVHVYFESLKASFENWERLRDAFIEGYLAEGGSEEVIERAKEIEERGRYVERVSMG.

The 195-residue stretch at 1 to 195 (MKVYLGGEAE…GRYVERVSMG (195 aa)) folds into the Protein kinase domain. Residue Lys-12 participates in ATP binding. The active-site Proton acceptor is the Asp-107.

The protein belongs to the protein kinase superfamily. Tyr protein kinase family. BUD32 subfamily.

The protein localises to the cytoplasm. The enzyme catalyses L-seryl-[protein] + ATP = O-phospho-L-seryl-[protein] + ADP + H(+). It carries out the reaction L-threonyl-[protein] + ATP = O-phospho-L-threonyl-[protein] + ADP + H(+). Its function is as follows. Could be involved in the formation of a threonylcarbamoyl group on adenosine at position 37 (t(6)A37) in tRNAs that read codons beginning with adenine. In Archaeoglobus fulgidus (strain ATCC 49558 / DSM 4304 / JCM 9628 / NBRC 100126 / VC-16), this protein is Probable serine/threonine-protein kinase BUD32 homolog.